A 236-amino-acid chain; its full sequence is (5-formylfuran-3-yl)methyl phosphate synthase (236 aa).

The active-site Schiff-base intermediate with substrate is the Lys27. Lys85 serves as the catalytic Proton acceptor.

It belongs to the MfnB family.

It carries out the reaction 2 D-glyceraldehyde 3-phosphate = 4-(hydroxymethyl)-2-furancarboxaldehyde phosphate + phosphate + 2 H2O. It participates in cofactor biosynthesis; methanofuran biosynthesis. In terms of biological role, catalyzes the formation of 4-(hydroxymethyl)-2-furancarboxaldehyde phosphate (4-HFC-P) from two molecules of glyceraldehyde-3-P (GA-3-P). The protein is (5-formylfuran-3-yl)methyl phosphate synthase of Methanococcus maripaludis (strain DSM 14266 / JCM 13030 / NBRC 101832 / S2 / LL).